Consider the following 120-residue polypeptide: Large ribosomal subunit protein uL18 (120 aa).

Belongs to the universal ribosomal protein uL18 family. Part of the 50S ribosomal subunit; part of the 5S rRNA/L5/L18/L25 subcomplex. Contacts the 5S and 23S rRNAs.

Its function is as follows. This is one of the proteins that bind and probably mediate the attachment of the 5S RNA into the large ribosomal subunit, where it forms part of the central protuberance. This Synechococcus elongatus (strain ATCC 33912 / PCC 7942 / FACHB-805) (Anacystis nidulans R2) protein is Large ribosomal subunit protein uL18.